The following is a 114-amino-acid chain: T cell receptor beta variable 25-1 (114 aa).

Positions 1 to 21 are cleaved as a signal peptide; that stretch reads MTIRLLCYVGFYFLGAGLMEA. In terms of domain architecture, Ig-like spans 22–114; sequence DIYQTPRYLV…TSQYLCASSE (93 aa). Residues Cys42 and Cys110 are joined by a disulfide bond. An N-linked (GlcNAc...) asparagine glycan is attached at Asn72.

As to quaternary structure, alpha-beta TR is a heterodimer composed of an alpha and beta chain; disulfide-linked. The alpha-beta TR is associated with the transmembrane signaling CD3 coreceptor proteins to form the TR-CD3 (TcR or TCR). The assembly of alpha-beta TR heterodimers with CD3 occurs in the endoplasmic reticulum where a single alpha-beta TR heterodimer associates with one CD3D-CD3E heterodimer, one CD3G-CD3E heterodimer and one CD247 homodimer forming a stable octameric structure. CD3D-CD3E and CD3G-CD3E heterodimers preferentially associate with TR alpha and TR beta chains, respectively. The association of the CD247 homodimer is the last step of TcR assembly in the endoplasmic reticulum and is required for transport to the cell surface.

It localises to the cell membrane. Functionally, v region of the variable domain of T cell receptor (TR) beta chain that participates in the antigen recognition. Alpha-beta T cell receptors are antigen specific receptors which are essential to the immune response and are present on the cell surface of T lymphocytes. Recognize peptide-major histocompatibility (MH) (pMH) complexes that are displayed by antigen presenting cells (APC), a prerequisite for efficient T cell adaptive immunity against pathogens. Binding of alpha-beta TR to pMH complex initiates TR-CD3 clustering on the cell surface and intracellular activation of LCK that phosphorylates the ITAM motifs of CD3G, CD3D, CD3E and CD247 enabling the recruitment of ZAP70. In turn ZAP70 phosphorylates LAT, which recruits numerous signaling molecules to form the LAT signalosome. The LAT signalosome propagates signal branching to three major signaling pathways, the calcium, the mitogen-activated protein kinase (MAPK) kinase and the nuclear factor NF-kappa-B (NF-kB) pathways, leading to the mobilization of transcription factors that are critical for gene expression and essential for T cell growth and differentiation. The T cell repertoire is generated in the thymus, by V-(D)-J rearrangement. This repertoire is then shaped by intrathymic selection events to generate a peripheral T cell pool of self-MH restricted, non-autoaggressive T cells. Post-thymic interaction of alpha-beta TR with the pMH complexes shapes TR structural and functional avidity. In Homo sapiens (Human), this protein is T cell receptor beta variable 25-1.